Here is a 292-residue protein sequence, read N- to C-terminus: 2-methylisocitrate lyase (292 aa).

Substrate is bound at residue 44–46 (SGA). Positions 84 and 86 each coordinate Mg(2+). Residues 121-122 (CG), Arg-156, Glu-186, 208-210 (NMT), Arg-239, and Arg-268 contribute to the substrate site.

It belongs to the isocitrate lyase/PEP mutase superfamily. Methylisocitrate lyase family. As to quaternary structure, homotetramer; dimer of dimers. Mg(2+) is required as a cofactor.

The enzyme catalyses (2S,3R)-3-hydroxybutane-1,2,3-tricarboxylate = pyruvate + succinate. Its pathway is organic acid metabolism; propanoate degradation. In terms of biological role, involved in the catabolism of short chain fatty acids (SCFA) via the 2-methylcitrate cycle I (propionate degradation route). Catalyzes the thermodynamically favored C-C bond cleavage of (2R,3S)-2-methylisocitrate to yield pyruvate and succinate via an alpha-carboxy-carbanion intermediate. This Shewanella oneidensis (strain ATCC 700550 / JCM 31522 / CIP 106686 / LMG 19005 / NCIMB 14063 / MR-1) protein is 2-methylisocitrate lyase.